Consider the following 256-residue polypeptide: tRNA pseudouridine synthase A (256 aa).

Residue Asp55 is the Nucleophile of the active site. Tyr113 provides a ligand contact to substrate.

The protein belongs to the tRNA pseudouridine synthase TruA family. As to quaternary structure, homodimer.

It carries out the reaction uridine(38/39/40) in tRNA = pseudouridine(38/39/40) in tRNA. Functionally, formation of pseudouridine at positions 38, 39 and 40 in the anticodon stem and loop of transfer RNAs. This chain is tRNA pseudouridine synthase A, found in Limosilactobacillus reuteri (strain DSM 20016) (Lactobacillus reuteri).